Consider the following 933-residue polypeptide: Protein inturned (933 aa).

Residues 1–54 (MASLPLCGSVRSPEGLPGDPSSQEDRQDYDPEDPVSGSGSYSPTSTDSNDLEPE) form a disordered region. Over residues 37–48 (GSGSYSPTSTDS) the composition is skewed to polar residues. Positions 186–264 (LVGIIHQTKW…PMQVKLTFEN (79 aa)) constitute a PDZ domain. Serine 675 is subject to Phosphoserine. The disordered stretch occupies residues 703–742 (LKTRKPSPSRSGGPDSGLEGEGVGLSPHTTESQGSHGSEE). The segment covering 710–719 (PSRSGGPDSG) has biased composition (low complexity). A compositionally biased stretch (polar residues) spans 729 to 738 (PHTTESQGSH).

The protein belongs to the inturned family. Component of the CPLANE (ciliogenesis and planar polarity effectors) complex, composed of INTU, FUZ and WDPCP. Interacts with CPLANE1. Interacts with NPHP4 and DAAM1; INTU is mediating the interaction between NPHP4 and DAAM1.

The protein resides in the cytoplasm. Its subcellular location is the cell surface. The protein localises to the cytoskeleton. It localises to the cilium basal body. It is found in the microtubule organizing center. The protein resides in the centrosome. Its subcellular location is the centriole. Its function is as follows. Plays a key role in ciliogenesis and embryonic development. Regulator of cilia formation by controlling the organization of the apical actin cytoskeleton and the positioning of the basal bodies at the apical cell surface, which in turn is essential for the normal orientation of elongating ciliary microtubules. Plays a key role in definition of cell polarity via its role in ciliogenesis but not via conversion extension. Has an indirect effect on hedgehog signaling. Proposed to function as core component of the CPLANE (ciliogenesis and planar polarity effectors) complex involved in the recruitment of peripheral IFT-A proteins to basal bodies. Required for recruitment of CPLANE2 to the mother centriole. Binds phosphatidylinositol 3-phosphate with highest affinity, followed by phosphatidylinositol 4-phosphate and phosphatidylinositol 5-phosphate. This Bos taurus (Bovine) protein is Protein inturned (INTU).